The following is a 948-amino-acid chain: Glycine dehydrogenase (decarboxylating) (948 aa).

Lys-696 bears the N6-(pyridoxal phosphate)lysine mark.

Belongs to the GcvP family. In terms of assembly, the glycine cleavage system is composed of four proteins: P, T, L and H. The cofactor is pyridoxal 5'-phosphate.

The enzyme catalyses N(6)-[(R)-lipoyl]-L-lysyl-[glycine-cleavage complex H protein] + glycine + H(+) = N(6)-[(R)-S(8)-aminomethyldihydrolipoyl]-L-lysyl-[glycine-cleavage complex H protein] + CO2. In terms of biological role, the glycine cleavage system catalyzes the degradation of glycine. The P protein binds the alpha-amino group of glycine through its pyridoxal phosphate cofactor; CO(2) is released and the remaining methylamine moiety is then transferred to the lipoamide cofactor of the H protein. The chain is Glycine dehydrogenase (decarboxylating) from Akkermansia muciniphila (strain ATCC BAA-835 / DSM 22959 / JCM 33894 / BCRC 81048 / CCUG 64013 / CIP 107961 / Muc).